Consider the following 90-residue polypeptide: Small ribosomal subunit protein bS16 (90 aa).

It belongs to the bacterial ribosomal protein bS16 family.

The sequence is that of Small ribosomal subunit protein bS16 from Clostridioides difficile (strain 630) (Peptoclostridium difficile).